A 349-amino-acid polypeptide reads, in one-letter code: Ribosomal RNA small subunit methyltransferase H (349 aa).

S-adenosyl-L-methionine-binding positions include 34-36 (GGH), aspartate 54, phenylalanine 81, aspartate 102, and glutamine 109.

The protein belongs to the methyltransferase superfamily. RsmH family.

Its subcellular location is the cytoplasm. It catalyses the reaction cytidine(1402) in 16S rRNA + S-adenosyl-L-methionine = N(4)-methylcytidine(1402) in 16S rRNA + S-adenosyl-L-homocysteine + H(+). Functionally, specifically methylates the N4 position of cytidine in position 1402 (C1402) of 16S rRNA. The sequence is that of Ribosomal RNA small subunit methyltransferase H from Dehalococcoides mccartyi (strain ATCC BAA-2266 / KCTC 15142 / 195) (Dehalococcoides ethenogenes (strain 195)).